A 1336-amino-acid chain; its full sequence is Misshapen-like kinase 1 (1336 aa).

Residues 25–289 form the Protein kinase domain; sequence FELVEVVGNG…TEQLLKFPFI (265 aa). ATP contacts are provided by residues 31 to 39 and K54; that span reads VGNGTYGQV. D153 serves as the catalytic Proton acceptor. Disordered regions lie at residues 299–347, 363–383, and 395–890; these read RIQL…NVPG, KSNS…QRDP, and QRRI…GGTM. Residues 317–333 show a composition bias toward acidic residues; the sequence is EETEYEYSGSEEEDDSH. Residues S324 and S326 each carry the phosphoserine modification. The segment covering 371-380 has biased composition (low complexity); it reads QQQQLQQQQQ. A compositionally biased stretch (basic and acidic residues) spans 396-466; the sequence is RRIEEQKEER…EEQRQSERLQ (71 aa). Low complexity predominate over residues 479–496; that stretch reads QKQQQQQQQQQQQQQQQQ. 2 positions are modified to omega-N-methylarginine: R502 and R510. Positions 519 to 529 are enriched in basic and acidic residues; it reads AWAREVEERAR. Residues 531–544 are compositionally biased toward polar residues; that stretch reads NKQQNSPLAKTKPS. Positions 548-562 are enriched in pro residues; sequence PEPPIPQASPSPPGP. The segment covering 599-609 has biased composition (polar residues); it reads RSQSLQDQPTR. The span at 622–632 shows a compositional bias: low complexity; the sequence is PAAVPTPTATP. S643 bears the Phosphoserine mark. Polar residues predominate over residues 672–684; it reads QRTSSIATALNTS. S703 carries the post-translational modification Phosphoserine. Over residues 718 to 731 the composition is skewed to pro residues; the sequence is PKPPGPPAQPPGPP. A compositionally biased stretch (basic and acidic residues) spans 738–750; sequence DLRRSDPGWERSD. Phosphoserine occurs at positions 756, 765, 781, 782, and 786. A compositionally biased stretch (basic and acidic residues) spans 808–825; the sequence is LLKERTLDEAPKPPKKAM. The segment covering 832 to 848 has biased composition (acidic residues); the sequence is EEVESSEDEEEEGDGEP. A mediates interaction with RAP2A region spans residues 870–1336; it reads MVVHDVEEVS…TLNRNCIMNW (467 aa). A Phosphothreonine modification is found at T895. Positions 909–946 are disordered; it reads GYTNLPDVVQPSHSPTENSQGQSPPTKDGGGDYQSRGL. Residues 919–933 show a composition bias toward polar residues; that stretch reads PSHSPTENSQGQSPP. The region spanning 1023 to 1310 is the CNH domain; the sequence is NSEILCAALW…KFLCERNDKV (288 aa).

It belongs to the protein kinase superfamily. STE Ser/Thr protein kinase family. STE20 subfamily. Interacts with RAP2A and NCK1. Interacts with TANC1. Mg(2+) serves as cofactor. Autophosphorylated.

The protein localises to the cytoplasm. The protein resides in the postsynaptic density. It localises to the cell projection. It is found in the axon. Its subcellular location is the dendrite. The enzyme catalyses L-seryl-[protein] + ATP = O-phospho-L-seryl-[protein] + ADP + H(+). It carries out the reaction L-threonyl-[protein] + ATP = O-phospho-L-threonyl-[protein] + ADP + H(+). Functionally, serine/threonine kinase which acts as a negative regulator of Ras-related Rap2-mediated signal transduction to control neuronal structure and AMPA receptor trafficking. Required for normal synaptic density, dendrite complexity, as well as surface AMPA receptor expression in hippocampal neurons. Can activate the JNK and MAPK14/p38 pathways and mediates stimulation of the stress-activated protein kinase MAPK14/p38 MAPK downstream of the Raf/ERK pathway. Phosphorylates TANC1 upon stimulation by RAP2A, MBP and SMAD1. Has an essential function in negative selection of thymocytes, perhaps by coupling NCK1 to activation of JNK1. Activator of the Hippo signaling pathway which plays a pivotal role in organ size control and tumor suppression by restricting proliferation and promoting apoptosis. MAP4Ks act in parallel to and are partially redundant with STK3/MST2 and STK4/MST2 in the phosphorylation and activation of LATS1/2, and establish MAP4Ks as components of the expanded Hippo pathway. The protein is Misshapen-like kinase 1 (Mink1) of Rattus norvegicus (Rat).